Consider the following 432-residue polypeptide: Enolase (432 aa).

(2R)-2-phosphoglycerate is bound at residue Gln167. The active-site Proton donor is Glu209. Mg(2+) is bound by residues Asp246, Glu291, and Asp318. Positions 343, 372, 373, and 394 each coordinate (2R)-2-phosphoglycerate. Lys343 (proton acceptor) is an active-site residue.

Belongs to the enolase family. In terms of assembly, component of the RNA degradosome, a multiprotein complex involved in RNA processing and mRNA degradation. The cofactor is Mg(2+).

The protein resides in the cytoplasm. It localises to the secreted. Its subcellular location is the cell surface. It carries out the reaction (2R)-2-phosphoglycerate = phosphoenolpyruvate + H2O. It participates in carbohydrate degradation; glycolysis; pyruvate from D-glyceraldehyde 3-phosphate: step 4/5. Its function is as follows. Catalyzes the reversible conversion of 2-phosphoglycerate (2-PG) into phosphoenolpyruvate (PEP). It is essential for the degradation of carbohydrates via glycolysis. The chain is Enolase from Pseudoalteromonas translucida (strain TAC 125).